Here is a 213-residue protein sequence, read N- to C-terminus: GTP-binding protein YPTC4 (213 aa).

Position 13-21 (13-21) interacts with GTP; the sequence is GDTGVGKSC. The Effector region motif lies at 35 to 43; it reads HDLTIGVEF. Residues 61–65, 119–122, and 149–151 contribute to the GTP site; these read DTAGQ, NKCD, and SAR. Positions 194–213 are disordered; the sequence is AGPQTVKPGEGGAAKSSSCC. S-geranylgeranyl cysteine attachment occurs at residues Cys-212 and Cys-213.

Belongs to the small GTPase superfamily. Rab family.

The protein localises to the cell membrane. Its function is as follows. Protein transport. Probably involved in vesicular traffic. The polypeptide is GTP-binding protein YPTC4 (YPTC4) (Chlamydomonas reinhardtii (Chlamydomonas smithii)).